Here is a 457-residue protein sequence, read N- to C-terminus: tRNA modification GTPase MnmE (457 aa).

The (6S)-5-formyl-5,6,7,8-tetrahydrofolate site is built by arginine 23, glutamate 85, and arginine 124. The 157-residue stretch at 220–376 folds into the TrmE-type G domain; it reads GALVVLAGQV…LVTAIRAAVL (157 aa). Asparagine 230 is a binding site for K(+). Residues 230–235, 249–255, and 274–277 each bind GTP; these read NAGKSS, TDLPGTT, and DTAG. A Mg(2+)-binding site is contributed by serine 234. K(+) is bound by residues threonine 249, leucine 251, and threonine 254. Threonine 255 lines the Mg(2+) pocket. Lysine 457 contacts (6S)-5-formyl-5,6,7,8-tetrahydrofolate.

The protein belongs to the TRAFAC class TrmE-Era-EngA-EngB-Septin-like GTPase superfamily. TrmE GTPase family. In terms of assembly, homodimer. Heterotetramer of two MnmE and two MnmG subunits. The cofactor is K(+).

The protein localises to the cytoplasm. Exhibits a very high intrinsic GTPase hydrolysis rate. Involved in the addition of a carboxymethylaminomethyl (cmnm) group at the wobble position (U34) of certain tRNAs, forming tRNA-cmnm(5)s(2)U34. This is tRNA modification GTPase MnmE from Nitratidesulfovibrio vulgaris (strain DP4) (Desulfovibrio vulgaris).